The following is a 303-amino-acid chain: Glutaminase (303 aa).

Substrate-binding residues include S63, N113, E157, N164, Y188, Y239, and V257.

The protein belongs to the glutaminase family. Homotetramer.

It catalyses the reaction L-glutamine + H2O = L-glutamate + NH4(+). This Saccharopolyspora erythraea (strain ATCC 11635 / DSM 40517 / JCM 4748 / NBRC 13426 / NCIMB 8594 / NRRL 2338) protein is Glutaminase.